We begin with the raw amino-acid sequence, 201 residues long: MEEYLVPLDQYLAAGVHIGTQQKTKDMKKFIYRVRQDGLYVLDVRKTDERLRVAGKFLAKFDPESILAVSVRLYGQRPVKKFGEVTGAKAIPGRFLPGTMTNPQVKNFIEPDVLIVTDPRADHQALKEAVEIGIPIVALVDTENFLSYVDIAIPTNNKGRKALALIYWILAREVLYNRKEIESREDFKIPVEDFEMRIIRT.

It belongs to the universal ribosomal protein uS2 family. Part of the 50S ribosomal subunit.

This chain is Small ribosomal subunit protein uS2, found in Thermococcus kodakarensis (strain ATCC BAA-918 / JCM 12380 / KOD1) (Pyrococcus kodakaraensis (strain KOD1)).